The chain runs to 895 residues: AP-1 complex subunit gamma (895 aa).

5 HEAT repeats span residues 130-166 (TAMA…LRKV), 167-205 (PDLT…MDST), 211-256 (KKMV…ILGQ), 301-339 (NGLK…TDIQ), and 341-376 (VQRH…ESNI). 3 disordered regions span residues 591-687 (KQEE…MNNM), 706-733 (NNNS…NNKS), and 746-770 (QLTP…QTSV). Low complexity-rich tracts occupy residues 604-626 (PTQT…QSSQ), 639-658 (QSSA…GGNA), 675-687 (NGNM…MNNM), 706-731 (NNNS…NNNN), and 746-765 (QLTP…LSPT). Residues 775–893 (PQPLTFLVYQ…SDVPDTPLPS (119 aa)) form the GAE domain.

The protein belongs to the adaptor complexes large subunit family. As to quaternary structure, adaptor protein complex 1 (AP-1) is a heterotetramer composed of two large adaptins (gamma-type subunit and beta-type subunit), a medium adaptin (mu-type subunit) and a small adaptin (sigma-type subunit). Interacts with rhgA.

The protein resides in the golgi apparatus. It localises to the trans-Golgi network. The protein localises to the cytoplasmic vesicle. Its subcellular location is the clathrin-coated vesicle membrane. Subunit of clathrin-associated adaptor protein complex 1 that plays a role in protein sorting in the trans-Golgi network (TGN) and endosomes. The AP complexes mediate the recruitment of clathrin to membranes and the recognition of sorting signals within the cytosolic tails of transmembrane cargo molecules. Also involved in early steps of phagocytosis and macropinocytosis. This Dictyostelium discoideum (Social amoeba) protein is AP-1 complex subunit gamma (ap1g1).